Consider the following 891-residue polypeptide: Extended synaptotagmin-3 (891 aa).

Positions methionine 1–arginine 30 are disordered. The Cytoplasmic segment spans residues methionine 1–serine 32. Residues valine 17–glycine 28 show a composition bias toward basic and acidic residues. A helical transmembrane segment spans residues glycine 33–valine 53. Position 54 (tyrosine 54) is a topological domain, lumenal. A helical membrane pass occupies residues leucine 55 to tryptophan 75. Over tryptophan 76–serine 891 the chain is Cytoplasmic. The SMP-LTD domain maps to aspartate 118 to lysine 295. C2 domains are found at residues valine 292–phenylalanine 412 and serine 430–histidine 570. The Ca(2+) site is built by lysine 325, aspartate 326, aspartate 336, aspartate 383, glutamate 384, aspartate 385, aspartate 387, aspartate 389, and aspartate 390. Positions serine 652–proline 711 are disordered. Over residues glutamate 659–glutamate 670 the composition is skewed to pro residues. The region spanning arginine 759–tyrosine 881 is the C2 3 domain. The tract at residues arginine 806–lysine 813 is required for phosphatidylinositol 4,5-bisphosphate-dependent location at the cell membrane.

This sequence belongs to the extended synaptotagmin family.

It localises to the cell membrane. The protein localises to the endoplasmic reticulum membrane. Tethers the endoplasmic reticulum to the cell membrane and promotes the formation of appositions between the endoplasmic reticulum and the cell membrane. Binds glycerophospholipids in a barrel-like domain and may play a role in cellular lipid transport. The polypeptide is Extended synaptotagmin-3 (Esyt3) (Mus musculus (Mouse)).